We begin with the raw amino-acid sequence, 474 residues long: Synaptotagmin-17 (474 aa).

A disordered region spans residues 54-112 (PAQTPPWLVSNRSEDKEGDSDNTTSEPPATPQDTSPDRRRSSSDTSRSTYSLTRRISSL). Over residues 96 to 112 (SDTSRSTYSLTRRISSL) the composition is skewed to low complexity. C2 domains follow at residues 184 to 310 (QLGM…HWWK) and 321 to 455 (ELGE…EQWH).

This sequence belongs to the synaptotagmin family.

Its subcellular location is the membrane. In terms of biological role, may play a role in dendrite formation by melanocytes. This chain is Synaptotagmin-17 (syt17), found in Xenopus tropicalis (Western clawed frog).